The following is a 323-amino-acid chain: Aquaporin-4 (323 aa).

Residues 1–36 (MSDRPAARRWGKCGPLCTRESIMVAFKGVWTQTFWK) lie on the Cytoplasmic side of the membrane. 2 S-palmitoyl cysteine lipidation sites follow: cysteine 13 and cysteine 17. A helical transmembrane segment spans residues 37–57 (AVTAEFLAMLIFVLLSLGSTI). Residues 58-69 (NWGGAEKPLPVD) are Extracellular-facing. A helical transmembrane segment spans residues 70–89 (MVLISLCFGLSIATMVQCFG). Topologically, residues 90 to 93 (HISG) are cytoplasmic. Residues 94 to 101 (GHINPAVT) constitute an intramembrane region (discontinuously helical). Residues 97-99 (NPA) carry the NPA 1 motif. Residues 102 to 115 (VAMVCTRRISIAKS) are Cytoplasmic-facing. Serine 111 is modified (phosphoserine; by PKG). A helical membrane pass occupies residues 116–136 (VFYIAAQCLGAIIGAGILYLV). Residues 137–155 (TPPSVVGGLGVTTVHGNLS) are Extracellular-facing. The N-linked (GlcNAc...) asparagine glycan is linked to asparagine 153. The helical transmembrane segment at 156 to 176 (AGHGLLVELIITFQLVFTIFA) threads the bilayer. Over 177–184 (SCDSKRTD) the chain is Cytoplasmic. A Phosphoserine; by PKC modification is found at serine 180. Residues 185–205 (VTGSIALAIGISVAIGHLFAI) traverse the membrane as a helical segment. Asparagine 206 is a glycosylation site (N-linked (GlcNAc...) asparagine). The Extracellular portion of the chain corresponds to 206–208 (NYT). The segment at residues 209 to 222 (GASMNPARSFGPAV) is an intramembrane region (discontinuously helical). An NPA 2 motif is present at residues 213–215 (NPA). Residues 223–231 (IMGNWENHW) lie on the Extracellular side of the membrane. Residues 232 to 252 (IYWVGPIIGAVLAGGLYEYVF) form a helical membrane-spanning segment. Topologically, residues 253-323 (CPDVELKRRF…DPSGEVLSSV (71 aa)) are cytoplasmic. Residues serine 276 and serine 285 each carry the phosphoserine modification. Phosphothreonine is present on threonine 289. A Phosphoserine modification is found at serine 321.

Belongs to the MIP/aquaporin (TC 1.A.8) family. Homotetramer. The tetramers can form oligomeric arrays in membranes. The size of the oligomers differs between tissues and is smaller in skeletal muscle than in brain. Interaction between AQP4 oligomeric arrays in close-by cells can contribute to cell-cell adhesion. Part of a complex containing MLC1, TRPV4, HEPACAM and ATP1B1. Post-translationally, phosphorylation by PKC at Ser-180 reduces conductance by 50%. Phosphorylation by PKG at Ser-111 in response to glutamate increases conductance by 40%. In terms of processing, isoform 2: Palmitoylated on its N-terminal region. Isoform 1: Not palmitoylated. As to expression, detected in brain and lung.

It is found in the cell membrane. Its subcellular location is the basolateral cell membrane. It localises to the endosome membrane. The protein resides in the sarcolemma. The protein localises to the cell projection. It carries out the reaction H2O(in) = H2O(out). Its function is as follows. Forms a water-specific channel. Plays an important role in brain water homeostasis and in glymphatic solute transport. Required for a normal rate of water exchange across the blood brain interface. Required for normal levels of cerebrospinal fluid influx into the brain cortex and parenchyma along paravascular spaces that surround penetrating arteries, and for normal drainage of interstitial fluid along paravenous drainage pathways. Thereby, it is required for normal clearance of solutes from the brain interstitial fluid, including soluble beta-amyloid peptides derived from APP. Plays a redundant role in urinary water homeostasis and urinary concentrating ability. The sequence is that of Aquaporin-4 (AQP4) from Bos taurus (Bovine).